A 70-amino-acid chain; its full sequence is U2-agatoxin-Ao1b (70 aa).

Residues 1–20 (MRAIISLILISAMVFSMIAA) form the signal peptide. A propeptide spanning residues 21–34 (VPEEEGLQLSEDER) is cleaved from the precursor. 3 disulfide bridges follow: C37–C53, C44–C58, and C52–C68. L69 is subject to Leucine amide.

Belongs to the neurotoxin 01 (U2-agtx) family. As to expression, expressed by the venom gland.

Its subcellular location is the secreted. Insect active toxin causing rapid but reversible paralysis in crickets. No activity shown in mammals. Does not show effect on mammalian voltage-gated calcium channels. In Agelena orientalis (Funnel-web spider), this protein is U2-agatoxin-Ao1b.